We begin with the raw amino-acid sequence, 271 residues long: Ribosomal RNA small subunit methyltransferase A (271 aa).

Residues Asn28, Leu30, Gly54, Glu75, Asp99, and Asn117 each contribute to the S-adenosyl-L-methionine site.

This sequence belongs to the class I-like SAM-binding methyltransferase superfamily. rRNA adenine N(6)-methyltransferase family. RsmA subfamily.

The protein resides in the cytoplasm. The catalysed reaction is adenosine(1518)/adenosine(1519) in 16S rRNA + 4 S-adenosyl-L-methionine = N(6)-dimethyladenosine(1518)/N(6)-dimethyladenosine(1519) in 16S rRNA + 4 S-adenosyl-L-homocysteine + 4 H(+). In terms of biological role, specifically dimethylates two adjacent adenosines (A1518 and A1519) in the loop of a conserved hairpin near the 3'-end of 16S rRNA in the 30S particle. May play a critical role in biogenesis of 30S subunits. In Thermus thermophilus (strain ATCC 27634 / DSM 579 / HB8), this protein is Ribosomal RNA small subunit methyltransferase A.